We begin with the raw amino-acid sequence, 124 residues long: Chemotaxis protein CheY1 (124 aa).

The Response regulatory domain occupies 2–120 (KLLVVDDSST…VLKEKLEVVL (119 aa)). Asp7, Asp8, Asp53, and Asn55 together coordinate Mg(2+). Asp53 is modified (4-aspartylphosphate).

Interacts (when phosphorylated) with FliM. The cofactor is Mg(2+). Phosphorylated by CheAY. Dephosphorylated (inactivated) by CheZ.

The protein resides in the cytoplasm. Its function is as follows. Chemotactic response regulator protein that modulates the rotation direction of bacterial flagellar motors. Plays an important role in the colonization and infection of Helicobacter pylori. Upon phosphorylation by CheA, interacts with the flagellar motor protein FliM to cause clockwise flagellar rotation and bacterial reversals, as opposed to straight swimming when CheY1 is not phosphorylated. In Helicobacter pylori (strain ATCC 700392 / 26695) (Campylobacter pylori), this protein is Chemotaxis protein CheY1.